The chain runs to 199 residues: Adenylyl-sulfate kinase (199 aa).

35–42 (GLSGSGKS) contributes to the ATP binding site. The active-site Phosphoserine intermediate is the Ser109.

Belongs to the APS kinase family.

It carries out the reaction adenosine 5'-phosphosulfate + ATP = 3'-phosphoadenylyl sulfate + ADP + H(+). It functions in the pathway sulfur metabolism; hydrogen sulfide biosynthesis; sulfite from sulfate: step 2/3. Catalyzes the synthesis of activated sulfate. The protein is Adenylyl-sulfate kinase of Clostridium kluyveri (strain ATCC 8527 / DSM 555 / NBRC 12016 / NCIMB 10680 / K1).